Consider the following 614-residue polypeptide: Probable indole-3-acetic acid-amido synthetase GH3.2 (614 aa).

This sequence belongs to the IAA-amido conjugating enzyme family. Expressed in roots, flowers and callus.

Functionally, may catalyze the synthesis of indole-3-acetic acid (IAA)-amino acid conjugates, providing a mechanism for the plant to cope with the presence of excess auxin. This is Probable indole-3-acetic acid-amido synthetase GH3.2 (GH3.2) from Oryza sativa subsp. japonica (Rice).